The primary structure comprises 706 residues: Probable protein S-acyltransferase 20 (706 aa).

2 consecutive transmembrane segments (helical) span residues 16–36 (VIAITVFCLLVVAFYAFFAPF) and 41–61 (IWEYVLIGVYSPVAILVFVLY). The DHHC domain occupies 172 to 222 (LFCTLCNCEVRKFSKHCRSCDKCVDCFDHHCKWLNNCVGRKNYVTFVSLMS). Cys-202 serves as the catalytic S-palmitoyl cysteine intermediate. 2 consecutive transmembrane segments (helical) span residues 220 to 240 (LMSASLLWLIIEAAVGIAVIV) and 275 to 295 (AVAIFACFPLGELLFFHMLLI). Disordered stretches follow at residues 470–505 (SSLSRNSFAPSQGSRDEYDTGSHGMSNLSSPSHVHE), 591–621 (LNPSSQTASTQNPRPILPAHDSSSGSSALRD), and 680–706 (RDSTSNQLPVFAPGGLGANSQTGSNIK). 3 stretches are compositionally biased toward polar residues: residues 492–501 (HGMSNLSSPS), 591–603 (LNPSSQTASTQNP), and 697–706 (ANSQTGSNIK).

This sequence belongs to the DHHC palmitoyltransferase family.

The protein resides in the cell membrane. The protein localises to the cytoplasmic vesicle membrane. The enzyme catalyses L-cysteinyl-[protein] + hexadecanoyl-CoA = S-hexadecanoyl-L-cysteinyl-[protein] + CoA. Palmitoyl acyltransferase. The polypeptide is Probable protein S-acyltransferase 20 (PAT20) (Arabidopsis thaliana (Mouse-ear cress)).